The following is a 440-amino-acid chain: MSNIDETENQEYLLLKAKNIITERTQSSYLPDEYIGAEKEAETLYAILDDAIINKKSTVGLITGPKGSGKSSFFKHCLKKYNESDYLLVRLSGMIHFNDNYALKEIAKALGIKIPSGLNIFHTFEFIRVKLGKETLESQINTSTKKIQFQSLPVVILIEELELMLTSLSTSKQSLFYNLLDLSHYKNVSLSFIATTSQHDIVNMFEKRIKSRFTQESIKIPPLSFDSIQIIFKNLISLPESFDDEEYRDTWNANVEKSLKSTSVIENFKKYYRLYNRVNNYHLLVNEIIDNLDYYDKDNKWINSKIINDGFEYLNQDVIEIMLKSLSVLEFTILGCILNTKVGTNINDDYITFDELYDGEYKKLSYSFFKNVDQAKKPSTIRILQHLLLLGIIKTQSRANDSGDFPKFKIAIDPDSIINAAKNRNDLPTVIVKYVTEWLT.

64-71 (GPKGSGKS) is a binding site for ATP.

This sequence belongs to the ORC4 family. In terms of assembly, ORC is composed of six subunits.

Its subcellular location is the nucleus. Component of the origin recognition complex (ORC) that binds origins of replication. DNA-binding is ATP-dependent, however specific DNA sequences that define origins of replication have not been identified so far. ORC is required to assemble the pre-replication complex necessary to initiate DNA replication. In Dictyostelium discoideum (Social amoeba), this protein is Origin recognition complex subunit 4 (orcD).